The chain runs to 124 residues: Small ribosomal subunit protein bS6 (124 aa).

The interval 99-124 is disordered; it reads PLPAPRIVPGSEPEPVEQQEAAAVEA. The segment covering 114–124 has biased composition (low complexity); it reads VEQQEAAAVEA.

Belongs to the bacterial ribosomal protein bS6 family.

Its function is as follows. Binds together with bS18 to 16S ribosomal RNA. The protein is Small ribosomal subunit protein bS6 of Prochlorococcus marinus (strain MIT 9303).